The primary structure comprises 590 residues: Arginine--tRNA ligase, cytoplasmic (590 aa).

Ala2 bears the N-acetylalanine mark. L-arginine contacts are provided by residues Ser137–Asn139, His148, Tyr322, Asp326, and Gln350. Positions Pro138–Leu149 match the 'HIGH' region motif. The tract at residues Asp470–Ser484 is interaction with tRNA.

The protein belongs to the class-I aminoacyl-tRNA synthetase family.

Its subcellular location is the cytoplasm. The protein localises to the cytosol. The catalysed reaction is tRNA(Arg) + L-arginine + ATP = L-arginyl-tRNA(Arg) + AMP + diphosphate. Forms part of a macromolecular complex that catalyzes the attachment of specific amino acids to cognate tRNAs during protein synthesis. This Arabidopsis thaliana (Mouse-ear cress) protein is Arginine--tRNA ligase, cytoplasmic.